A 661-amino-acid polypeptide reads, in one-letter code: UvrABC system protein B (661 aa).

Positions 26 to 413 (KGINEGRKHQ…TPEMVEQIIR (388 aa)) constitute a Helicase ATP-binding domain. 39 to 46 (GATGTGKT) provides a ligand contact to ATP. Positions 92–115 (YYDYYQPEAYVPQTDTFIEKDASI) match the Beta-hairpin motif. In terms of domain architecture, Helicase C-terminal spans 430-596 (QIDDLIGEIQ…TINKKIRDVI (167 aa)). The UVR domain occupies 625–660 (EKVIAQMESDMKEAAKALDFERAAELRDLLLELKSE).

Belongs to the UvrB family. In terms of assembly, forms a heterotetramer with UvrA during the search for lesions. Interacts with UvrC in an incision complex.

It localises to the cytoplasm. In terms of biological role, the UvrABC repair system catalyzes the recognition and processing of DNA lesions. A damage recognition complex composed of 2 UvrA and 2 UvrB subunits scans DNA for abnormalities. Upon binding of the UvrA(2)B(2) complex to a putative damaged site, the DNA wraps around one UvrB monomer. DNA wrap is dependent on ATP binding by UvrB and probably causes local melting of the DNA helix, facilitating insertion of UvrB beta-hairpin between the DNA strands. Then UvrB probes one DNA strand for the presence of a lesion. If a lesion is found the UvrA subunits dissociate and the UvrB-DNA preincision complex is formed. This complex is subsequently bound by UvrC and the second UvrB is released. If no lesion is found, the DNA wraps around the other UvrB subunit that will check the other stand for damage. The protein is UvrABC system protein B of Bacillus licheniformis (strain ATCC 14580 / DSM 13 / JCM 2505 / CCUG 7422 / NBRC 12200 / NCIMB 9375 / NCTC 10341 / NRRL NRS-1264 / Gibson 46).